The following is a 294-amino-acid chain: Bifunctional protein FolD (294 aa).

Residues 166–168, Ser191, and Ile232 contribute to the NADP(+) site; that span reads GRS.

Belongs to the tetrahydrofolate dehydrogenase/cyclohydrolase family. As to quaternary structure, homodimer.

The enzyme catalyses (6R)-5,10-methylene-5,6,7,8-tetrahydrofolate + NADP(+) = (6R)-5,10-methenyltetrahydrofolate + NADPH. The catalysed reaction is (6R)-5,10-methenyltetrahydrofolate + H2O = (6R)-10-formyltetrahydrofolate + H(+). Its pathway is one-carbon metabolism; tetrahydrofolate interconversion. Functionally, catalyzes the oxidation of 5,10-methylenetetrahydrofolate to 5,10-methenyltetrahydrofolate and then the hydrolysis of 5,10-methenyltetrahydrofolate to 10-formyltetrahydrofolate. The chain is Bifunctional protein FolD from Bradyrhizobium sp. (strain ORS 278).